Consider the following 471-residue polypeptide: Regulator of microtubule dynamics protein 3 (471 aa).

The Mitochondrial intermembrane segment spans residues 1–9 (MSSLGTLGG). A helical membrane pass occupies residues 10 to 32 (ARAGLGLLLGTAAGLGFLCALYS). At 33-471 (QRWKRTQRRG…LEELEVILGE (439 aa)) the chain is on the cytoplasmic side. The tract at residues 39–70 (QRRGQSQSQSNSLDYTQTSEPGRQVRPLRAAP) is disordered. Low complexity predominate over residues 41-50 (RGQSQSQSNS). A phosphoserine mark is found at Ser-44, Ser-46, Ser-50, and Ser-57. The stretch at 90–123 (LDRLEFVLTSLVALRREVEELRSSLQGLAGQIVG) forms a coiled coil. The short motif at 156-162 (VYFTAAS) is the FFAT element. Thr-159 is modified (phosphothreonine). Positions 169 to 206 (AESEGGYTTANAESDYERDSERESDGDGEDEVSCETVK) are disordered. 4 positions are modified to phosphoserine: Ser-182, Ser-192, Ser-212, and Ser-233. Positions 183-193 (DYERDSERESD) are enriched in basic and acidic residues.

The protein belongs to the RMDN family. Interacts with PTPN2. Interacts with microtubules. Interacts with VAPB. Interacts (via FFAT motif) with MOSPD2 (via MSP domain). Interacts (via phosphorylated FFAT motif) with MOSPD2, VAPA and VAPB. Post-translationally, phosphorylation at Thr-160 of the FFAT motif activates interaction with MOSPD2, VAPA and VAPB.

It is found in the mitochondrion outer membrane. The protein localises to the cytoplasm. The protein resides in the nucleus. Its subcellular location is the cytoskeleton. It localises to the spindle. It is found in the spindle pole. In terms of biological role, involved in cellular calcium homeostasis regulation. May participate in differentiation and apoptosis of keratinocytes. Overexpression induces apoptosis. The sequence is that of Regulator of microtubule dynamics protein 3 from Bos taurus (Bovine).